Here is a 181-residue protein sequence, read N- to C-terminus: MILKETTINNYATALFNIAVKEKLVDDYIIQVDALIKSLADKDEFNKLVTYSNKEQKKQAILIIENTFSSFGFDIYLINALKILVENQLFINTRMILKVLYKKLLAYKNIVLGEVYSTEKLTKTQLNAIKKKISNKVNKKVELVNKIDPTLIGGIKVSVEDKVFDGSIKAKLEALKKQMNT.

It belongs to the ATPase delta chain family. F-type ATPases have 2 components, F(1) - the catalytic core - and F(0) - the membrane proton channel. F(1) has five subunits: alpha(3), beta(3), gamma(1), delta(1), epsilon(1). F(0) has three main subunits: a(1), b(2) and c(10-14). The alpha and beta chains form an alternating ring which encloses part of the gamma chain. F(1) is attached to F(0) by a central stalk formed by the gamma and epsilon chains, while a peripheral stalk is formed by the delta and b chains.

The protein localises to the cell membrane. Its function is as follows. F(1)F(0) ATP synthase produces ATP from ADP in the presence of a proton or sodium gradient. F-type ATPases consist of two structural domains, F(1) containing the extramembraneous catalytic core and F(0) containing the membrane proton channel, linked together by a central stalk and a peripheral stalk. During catalysis, ATP synthesis in the catalytic domain of F(1) is coupled via a rotary mechanism of the central stalk subunits to proton translocation. This protein is part of the stalk that links CF(0) to CF(1). It either transmits conformational changes from CF(0) to CF(1) or is implicated in proton conduction. The polypeptide is ATP synthase subunit delta (Mycoplasma mycoides subsp. mycoides SC (strain CCUG 32753 / NCTC 10114 / PG1)).